A 358-amino-acid polypeptide reads, in one-letter code: tRNA pseudouridine synthase B (358 aa).

Residues 1-50 are disordered; the sequence is MTTPDAAIDSKISDSNGADKNKSAADDNAFNAPGRKRHHNNQPRRDKRDV. Aspartate 87 functions as the Nucleophile in the catalytic mechanism.

The protein belongs to the pseudouridine synthase TruB family. Type 1 subfamily.

It carries out the reaction uridine(55) in tRNA = pseudouridine(55) in tRNA. Functionally, responsible for synthesis of pseudouridine from uracil-55 in the psi GC loop of transfer RNAs. The chain is tRNA pseudouridine synthase B from Nitrobacter winogradskyi (strain ATCC 25391 / DSM 10237 / CIP 104748 / NCIMB 11846 / Nb-255).